Consider the following 465-residue polypeptide: Ribulose bisphosphate carboxylase large chain (465 aa).

Lys-4 carries the N6,N6,N6-trimethyllysine modification. 2 residues coordinate substrate: Asn-113 and Thr-163. Lys-165 serves as the catalytic Proton acceptor. Residue Lys-167 coordinates substrate. 3 residues coordinate Mg(2+): Lys-191, Asp-193, and Glu-194. An N6-carboxylysine modification is found at Lys-191. His-284 functions as the Proton acceptor in the catalytic mechanism. Positions 285, 317, and 369 each coordinate substrate.

This sequence belongs to the RuBisCO large chain family. Type I subfamily. In terms of assembly, heterohexadecamer of 8 large chains and 8 small chains; disulfide-linked. The disulfide link is formed within the large subunit homodimers. Requires Mg(2+) as cofactor. Post-translationally, the disulfide bond which can form in the large chain dimeric partners within the hexadecamer appears to be associated with oxidative stress and protein turnover.

Its subcellular location is the plastid. The protein localises to the chloroplast. The enzyme catalyses 2 (2R)-3-phosphoglycerate + 2 H(+) = D-ribulose 1,5-bisphosphate + CO2 + H2O. The catalysed reaction is D-ribulose 1,5-bisphosphate + O2 = 2-phosphoglycolate + (2R)-3-phosphoglycerate + 2 H(+). Functionally, ruBisCO catalyzes two reactions: the carboxylation of D-ribulose 1,5-bisphosphate, the primary event in carbon dioxide fixation, as well as the oxidative fragmentation of the pentose substrate in the photorespiration process. Both reactions occur simultaneously and in competition at the same active site. This Byrsonima crassifolia (Cajuil cimarron) protein is Ribulose bisphosphate carboxylase large chain.